The sequence spans 522 residues: BTB/POZ domain-containing protein 3 (522 aa).

The BTB domain occupies 120-190; it reads ADVHFVVGPP…IYCDEIDLAA (71 aa). Positions 235–300 constitute a BACK domain; that stretch reads FEEPDLTQRC…NWAEVECQRQ (66 aa).

Strongly expressed in the primary visual cortex.

It localises to the cytoplasm. Its subcellular location is the cytosol. It is found in the nucleus. Its function is as follows. Acts as a key regulator of dendritic field orientation during development of sensory cortex. Also directs dendrites toward active axon terminals when ectopically expressed. This is BTB/POZ domain-containing protein 3 (BTBD3) from Callithrix jacchus (White-tufted-ear marmoset).